A 459-amino-acid chain; its full sequence is Peptidyl-prolyl cis-trans isomerase FKBP4 (459 aa).

Met1 is subject to N-acetylmethionine; in peptidyl-prolyl cis-trans isomerase FKBP4; alternate. The disordered stretch occupies residues 1 to 24; that stretch reads MTAEEMKATESGAQSAPLPMEGVD. Thr2 is subject to N-acetylthreonine; in peptidyl-prolyl cis-trans isomerase FKBP4, N-terminally processed; partial. Residues 50–138 enclose the PPIase FKBP-type 1 domain; sequence GDRVFVHYTG…VFEVELFEFK (89 aa). Residue Thr143 is modified to Phosphothreonine; by CK2. Residues 167–253 form the PPIase FKBP-type 2 domain; that stretch reads GAIVEVALEG…KYELHLKSFE (87 aa). The residue at position 220 (Tyr220) is a Phosphotyrosine. The interaction with tubulin stretch occupies residues 267–400; the sequence is LEQSTIVKER…TQLAVCQQRI (134 aa). TPR repeat units lie at residues 270–303, 319–352, and 353–386; these read STIVKERGTVYFKEGKYKQALLQYKKIVSWLEYE, LASHLNLAMCHLKLQAFSAAIESCNKALELDSNN, and EKGLFRRGEAHLAVNDFELARADFQKVLQLYPNN. Lys282 bears the N6-acetyllysine mark. Omega-N-methylarginine is present on Arg373. The disordered stretch occupies residues 421–459; sequence EENKAKAEASSGDHPTDTEMKEEQKSNTAGSQSQVETEA. Residues 434-445 are compositionally biased toward basic and acidic residues; sequence HPTDTEMKEEQK. A Phosphothreonine modification is found at Thr436. Lys441 participates in a covalent cross-link: Glycyl lysine isopeptide (Lys-Gly) (interchain with G-Cter in SUMO1). The span at 446-459 shows a compositional bias: polar residues; the sequence is SNTAGSQSQVETEA. Phosphoserine occurs at positions 451 and 453.

As to quaternary structure, homodimer. Interacts with GLMN. Associates with HSP90AA1 and HSP70 in steroid hormone receptor complexes. Also interacts with peroxisomal phytanoyl-CoA alpha-hydroxylase (PHYH). Interacts with NR3C1 and dynein. Interacts with HSF1 in the HSP90 complex. Associates with tubulin. Interacts with MAPT/TAU. Interacts (via TPR domain) with S100A1, S100A2 and S100A6; the interaction is Ca(2+) dependent. Interaction with S100A1 and S100A2 (but not with S100A6) leads to inhibition of FKBP4-HSP90 interaction. Interacts with dynein; causes partially NR3C1 transport to the nucleus. Post-translationally, phosphorylation by CK2 results in loss of HSP90 binding activity. In terms of tissue distribution, widely expressed.

The protein resides in the cytoplasm. It localises to the cytosol. Its subcellular location is the mitochondrion. The protein localises to the nucleus. It is found in the cytoskeleton. The protein resides in the cell projection. It localises to the axon. The catalysed reaction is [protein]-peptidylproline (omega=180) = [protein]-peptidylproline (omega=0). With respect to regulation, inhibited by FK506. Immunophilin protein with PPIase and co-chaperone activities. Component of steroid receptors heterocomplexes through interaction with heat-shock protein 90 (HSP90). May play a role in the intracellular trafficking of heterooligomeric forms of steroid hormone receptors between cytoplasm and nuclear compartments. The isomerase activity controls neuronal growth cones via regulation of TRPC1 channel opening. Also acts as a regulator of microtubule dynamics by inhibiting MAPT/TAU ability to promote microtubule assembly. May have a protective role against oxidative stress in mitochondria. The sequence is that of Peptidyl-prolyl cis-trans isomerase FKBP4 (FKBP4) from Homo sapiens (Human).